We begin with the raw amino-acid sequence, 383 residues long: Izumo sperm-egg fusion protein 1 (383 aa).

An N-terminal signal peptide occupies residues 1 to 21; sequence MGLHFTLLLAALANCLCPARL. Intrachain disulfides connect C22-C149, C25-C152, C135-C159, C139-C165, and C182-C233. Residues 22 to 306 are Extracellular-facing; sequence CIICDPFVVA…HRPEKKLKSR (285 aa). Residues 148 to 160 are important for interaction with IZUMO1R; sequence WCNKCEKQMHFCR. Residues 167–251 form the Ig-like C2-type domain; it reads ERQIEVHRLE…PATIIYYHVT (85 aa). N-linked (GlcNAc...) asparagine glycosylation is present at N204. A helical transmembrane segment spans residues 307–327; that stretch reads LLILLILGFVVLVASVIASVL. Topologically, residues 328–383 are cytoplasmic; it reads HFRKTRVKSKNSNVENKTSAAEFKSEAESPQKMGSRKLSQAEFHTDSSDKVEEADN. The tract at residues 335–383 is disordered; sequence KSKNSNVENKTSAAEFKSEAESPQKMGSRKLSQAEFHTDSSDKVEEADN. Over residues 337–346 the composition is skewed to polar residues; the sequence is KNSNVENKTS. 3 positions are modified to phosphoserine: S339, S346, and S366. Residues 370-383 show a composition bias toward basic and acidic residues; sequence FHTDSSDKVEEADN. T372 carries the phosphothreonine modification.

This sequence belongs to the Izumo family. As to quaternary structure, monomer, homodimer; disulfide-linked and homooligomer; depending on the context. Interacts with IZUMO1R/JUNO. IZUMO1 and IZUMO1R/JUNO form a complex with 1:1 stoichiometry. In gamete recognition, IZUMO1R/JUNO first binds to monomeric IZUMO1. The weak, but specific interaction with IZUMO1R/JUNO induces IZUMO1 homodimerization. The process follows a tight binding phase where IZUMO1 bends the entire structure towards the sperm membrane side through a thiol-disulfide exchange reaction. The molecule no longer binds to IZUMO1R/JUNO and instead binds to a putative second oocyte receptor. Interacts with ACE3. Part of a oolemmal binding multimeric complex (IZUMO1 complex) composed at least of IZUMO1 and GLIPR1L1; the complex assemblage is influenced by the maturation status of the male germ cell. Interacts with GLIPR1L1. Interacts with FREY; the interaction retains IZUMO1 at the endoplasmic reticulum membrane and coordinates IZUMO1 complex assembly. Interacts with WDR54. Forms a complex with SPACA6 and TMEM81 on spermatocyte cell membrane. Post-translationally, N-glycosylated. Glycosylation is not essential for fusion and for proper protein trafficking in sperm. Phosphorylated. The cytoplasmic C-terminus is phosphorylated and undergoes phosphorylation changes during epididymal transit. In terms of tissue distribution, expressed in sperm (at protein level).

The protein localises to the cell membrane. The protein resides in the cytoplasmic vesicle. It is found in the secretory vesicle. Its subcellular location is the acrosome membrane. In terms of biological role, essential sperm cell-surface protein required for fertilization by acting as a ligand for IZUMO1R/JUNO receptor on egg. The IZUMO1:IZUMO1R/JUNO interaction is a necessary adhesion event between sperm and egg that is required for fertilization but is not sufficient for cell fusion. The ligand-receptor interaction probably does not act as a membrane 'fusogen'. Plays a critical role in sperm-oolemma binding prior to plasma membrane fusion. Can mediate cell-cell fusion in cultured mammalian cells independently of its binding to IZUMO1R/JUNO. The protein is Izumo sperm-egg fusion protein 1 of Rattus norvegicus (Rat).